The primary structure comprises 467 residues: MNQQDIEQVVKAVLLKMQSSDTPSAAVHEMGVFASLDDAVAAAKVAQQGLKSVAMRQLAIAAIREAGEKHARDLAELAVSETGMGRVEDKFAKNVAQARGTPGVECLSPQVLTGDNGLTLIENAPWGVVASVTPSTNPAATVINNAISLIAAGNSVIFAPHPAAKKVSQRAITLLNQAIVAAGGPENLLVTVANPDIETAQRLFKFPGIGLLVVTGGEAVVEAARKHTNKRLIAAGAGNPPVVVDETADLARAAQSIVKGASFDNNIICADEKVLIVVDSVADELMRLMEGQHAVKLTAEQAQQLQPVLLKNIDERGKGTVSRDWVGRDAGKIAAAIGLKVPQETRLLFVETTAEHPFAVTELMMPVLPVVRVANVADAIALAVKLEGGCHHTAAMHSRNIENMNQMANAIDTSIFVKNGPCIAGLGLGGEGWTTMTITTPTGEGVTSARTFVRLRRCVLVDAFRIV.

This sequence belongs to the EutE/PduP family. In terms of assembly, interacts with EutS, which targets it to the interior of the BMC. The cofactor is Has a very strong preference for NAD(+) over NADP(+)..

The protein resides in the bacterial microcompartment. It carries out the reaction acetaldehyde + NAD(+) + CoA = acetyl-CoA + NADH + H(+). Its pathway is amine and polyamine degradation; ethanolamine degradation. Its function is as follows. Acts as the second step in ethanolamine degradation by converting acetaldehyde into acetyl-CoA. May play a role in bacterial microcompartment (BMC) assembly or maintenance. Directly targeted to the BMC. Its heterologous expression in S.cerevisiae increases the level of acetylating acetaldehyde dehydrogenase activity. The polypeptide is Acetaldehyde dehydrogenase (acetylating) EutE (eutE) (Escherichia coli (strain K12)).